The following is a 153-amino-acid chain: UPF0735 ACT domain-containing protein FN1487 (153 aa).

Positions 76 to 152 (SLHLSLKDRV…GIADIRITGS (77 aa)) constitute an ACT domain.

Belongs to the UPF0735 family.

This is UPF0735 ACT domain-containing protein FN1487 from Fusobacterium nucleatum subsp. nucleatum (strain ATCC 25586 / DSM 15643 / BCRC 10681 / CIP 101130 / JCM 8532 / KCTC 2640 / LMG 13131 / VPI 4355).